Reading from the N-terminus, the 152-residue chain is Ribosome maturation factor RimP (152 aa).

It belongs to the RimP family.

It localises to the cytoplasm. Its function is as follows. Required for maturation of 30S ribosomal subunits. In Alteromonas mediterranea (strain DSM 17117 / CIP 110805 / LMG 28347 / Deep ecotype), this protein is Ribosome maturation factor RimP.